Here is a 378-residue protein sequence, read N- to C-terminus: Decaprenyl-diphosphate synthase subunit 1 (378 aa).

Positions 72, 75, and 130 each coordinate isopentenyl diphosphate. Residues D137 and D141 each contribute to the Mg(2+) site. R147 serves as a coordination point for isopentenyl diphosphate.

This sequence belongs to the FPP/GGPP synthase family. As to quaternary structure, heterotetramer of 2 dps1 and 2 dlp1 subunits. Mg(2+) is required as a cofactor.

It localises to the mitochondrion. It carries out the reaction 7 isopentenyl diphosphate + (2E,6E)-farnesyl diphosphate = all-trans-decaprenyl diphosphate + 7 diphosphate. It participates in cofactor biosynthesis; ubiquinone biosynthesis. In terms of biological role, supplies decaprenyl diphosphate, the precursor for the side chain of the isoprenoid quinones ubiquinone-10. This Schizosaccharomyces pombe (strain 972 / ATCC 24843) (Fission yeast) protein is Decaprenyl-diphosphate synthase subunit 1 (dps1).